We begin with the raw amino-acid sequence, 586 residues long: Dual specificity tyrosine-phosphorylation-regulated kinase 3 (586 aa).

Positions 1 to 13 (MGGAARERGRKDA) are enriched in basic and acidic residues. Residues 1–187 (MGGAARERGR…QGVIGGPNNG (187 aa)) form a disordered region. The region spanning 208 to 521 (YEVLKIIGKG…PAQALRHPWI (314 aa)) is the Protein kinase domain. ATP contacts are provided by residues 214 to 222 (IGKGSFGQV), K237, and 287 to 290 (FELL). The Proton acceptor role is filled by D334. Y368 carries the phosphotyrosine modification. Residues 467 to 480 (RSRRGKKRGPPGSK) carry the Nuclear localization signal motif.

It belongs to the protein kinase superfamily. CMGC Ser/Thr protein kinase family. MNB/DYRK subfamily. Interacts with SIRT1. The cofactor is Mg(2+). Protein kinase activity is activated following autophosphorylation at Tyr-368. In terms of processing, ubiquitinated at anaphase by the anaphase-promoting complex (APC/C), leading to its degradation by the proteasome. In terms of tissue distribution, expressed predominantly in testis. Expressed in late pachytene spermatocytes.

It is found in the nucleus. The protein resides in the cytoplasm. The protein localises to the nucleus speckle. It localises to the cytoplasmic granule. Its subcellular location is the cytoskeleton. It is found in the microtubule organizing center. The protein resides in the centrosome. The catalysed reaction is L-seryl-[protein] + ATP = O-phospho-L-seryl-[protein] + ADP + H(+). The enzyme catalyses L-threonyl-[protein] + ATP = O-phospho-L-threonyl-[protein] + ADP + H(+). It catalyses the reaction L-tyrosyl-[protein] + ATP = O-phospho-L-tyrosyl-[protein] + ADP + H(+). Protein kinase activity is activated following autophosphorylation at Tyr-368. Functionally, dual-specificity protein kinase that promotes disassembly of several types of membraneless organelles during mitosis, such as stress granules, nuclear speckles and pericentriolar material. Dual-specificity tyrosine-regulated kinases (DYRKs) autophosphorylate a critical tyrosine residue in their activation loop and phosphorylate their substrate on serine and threonine residues. Acts as a central dissolvase of membraneless organelles during the G2-to-M transition, after the nuclear-envelope breakdown: acts by mediating phosphorylation of multiple serine and threonine residues in unstructured domains of proteins, such as SRRM1 and PCM1. Does not mediate disassembly of all membraneless organelles: disassembly of P-body and nucleolus is not regulated by DYRK3. Dissolution of membraneless organelles at the onset of mitosis is also required to release mitotic regulators, such as ZNF207, from liquid-unmixed organelles where they are sequestered and keep them dissolved during mitosis. Regulates mTORC1 by mediating the dissolution of stress granules: during stressful conditions, DYRK3 partitions from the cytosol to the stress granule, together with mTORC1 components, which prevents mTORC1 signaling. When stress signals are gone, the kinase activity of DYRK3 is required for the dissolution of stress granule and mTORC1 relocation to the cytosol: acts by mediating the phosphorylation of the mTORC1 inhibitor AKT1S1, allowing full reactivation of mTORC1 signaling. Also acts as a negative regulator of EPO-dependent erythropoiesis: may place an upper limit on red cell production during stress erythropoiesis. Inhibits cell death due to cytokine withdrawal in hematopoietic progenitor cells. Promotes cell survival upon genotoxic stress through phosphorylation of SIRT1: this in turn inhibits p53/TP53 activity and apoptosis. The protein is Dual specificity tyrosine-phosphorylation-regulated kinase 3 of Rattus norvegicus (Rat).